Reading from the N-terminus, the 625-residue chain is MIFLYQVVHFILFTSVSGECVTQLLKDTCFEGGDITTVFTPSAKYCQVVCTYHPRCLLFTFTAESPSEDPTRWFTCVLKDSVTETLPRVNRTAAISGYSFKQCSHQISACNKDIYVDLDMKGINYNSSVAKSAQECQERCTDDVHCHFFTYATRQFPSLEHRNICLLKHTQTGTPTRITKLDKVVSGFSLKSCALSNLACIRDIFPNTVFADSNIDSVMAPDAFVCGRICTHHPGCLFFTFFSQEWPKESQRNLCLLKTSESGLPSTRIKKSKALSGFSLQSCRHSIPVFCHSSFYHDTDFLGEELDIVAAKSHEACQKLCTNAVRCQFFTYTPAQASCNEGKGKCYLKLSSNGSPTKILHGRGGISGYTLRLCKMDNECTTKIKPRIVGGTASVRGEWPWQVTLHTTSPTQRHLCGGSIIGNQWILTAAHCFYGVESPKILRVYSGILNQSEIKEDTSFFGVQEIIIHDQYKMAESGYDIALLKLETTVNYTDSQRPICLPSKGDRNVIYTDCWVTGWGYRKLRDKIQNTLQKAKIPLVTNEECQKRYRGHKITHKMICAGYREGGKDACKGDSGGPLSCKHNEVWHLVGITSWGEGCAQRERPGVYTNVVEYVDWILEKTQAV.

The first 18 residues, 1–18, serve as a signal peptide directing secretion; that stretch reads MIFLYQVVHFILFTSVSG. Apple domains are found at residues 20 to 103, 110 to 193, 200 to 283, and 291 to 374; these read CVTQ…FKQC, CNKD…LKSC, CIRD…LQSC, and CHSS…LRLC. 17 cysteine pairs are disulfide-bonded: Cys20–Cys103, Cys46–Cys76, Cys50–Cys56, Cys110–Cys193, Cys136–Cys165, Cys140–Cys146, Cys200–Cys283, Cys226–Cys255, Cys230–Cys236, Cys291–Cys374, Cys317–Cys346, Cys321–Cys327, Cys380–Cys500, Cys416–Cys432, Cys514–Cys581, Cys545–Cys560, and Cys571–Cys599. 2 N-linked (GlcNAc...) (complex) asparagine glycosylation sites follow: Asn90 and Asn126. Residue Asn163 is glycosylated (N-linked (GlcNAc...) (complex) asparagine; atypical). The Peptidase S1 domain maps to 388–623; that stretch reads IVGGTASVRG…YVDWILEKTQ (236 aa). His431 functions as the Charge relay system in the catalytic mechanism. N-linked (GlcNAc...) (complex) asparagine glycosylation occurs at Asn450. The active-site Charge relay system is Asp480. Asn491 carries an N-linked (GlcNAc...) (complex) asparagine glycan. 547–550 provides a ligand contact to heparin; sequence KRYR. Ser575 (charge relay system) is an active-site residue.

It belongs to the peptidase S1 family. Plasma kallikrein subfamily. In terms of assembly, homodimer; disulfide-linked. Can form non-covalently bonded homodimers. After activation the heavy and light chains are also linked by a disulfide bond. Interacts (activated) with F9 (inactive and activated) in calcium-dependent manner. Forms a heterodimer with SERPINA5. Interacts with Anopheles gambiae D7L2. Interacts (activated) with guianensin, an anticoagulant protein from Simulium guianense saliva. Post-translationally, N-glycosylated on both chains. N-glycosylated sites mainly consist of nonfucosylated sialylated biantennary (in high abundance) and/or triantennary (in low abundance) complex structures. Glycosylation at Asn-163 uses a rare non-canonical Asn-X-Cys glycosite. Activated by factor XIIa (or XII), which cleaves each polypeptide after Arg-387 into the light chain, which contains the active site, and the heavy chain, which associates with high molecular weight (HMW) kininogen. Activated by F12 (activated); the presence of negatively charged surfaces accelerates activation. Activated by F2 (thrombin); the presence of negatively charged surfaces, such as polyphosphate and dextran sulfate, strongly accelerates activation. Autoactivated; the presence of negatively charged surfaces, such as polyphosphate and dextran sulfate, accelerates autoactivation and autolysis. As to expression, isoform 2 is produced by platelets and megakaryocytes but absent from other blood cells.

Its subcellular location is the secreted. The enzyme catalyses Selective cleavage of Arg-|-Ala and Arg-|-Val bonds in factor IX to form factor IXa.. With respect to regulation, inhibited by SERPINA5. Its function is as follows. Factor XI triggers the middle phase of the intrinsic pathway of blood coagulation by activating factor IX. In Homo sapiens (Human), this protein is Coagulation factor XI (F11).